The following is a 339-amino-acid chain: Phosphoribosylformylglycinamidine cyclo-ligase (339 aa).

This sequence belongs to the AIR synthase family.

It is found in the cytoplasm. The enzyme catalyses 2-formamido-N(1)-(5-O-phospho-beta-D-ribosyl)acetamidine + ATP = 5-amino-1-(5-phospho-beta-D-ribosyl)imidazole + ADP + phosphate + H(+). It participates in purine metabolism; IMP biosynthesis via de novo pathway; 5-amino-1-(5-phospho-D-ribosyl)imidazole from N(2)-formyl-N(1)-(5-phospho-D-ribosyl)glycinamide: step 2/2. The chain is Phosphoribosylformylglycinamidine cyclo-ligase from Oceanobacillus iheyensis (strain DSM 14371 / CIP 107618 / JCM 11309 / KCTC 3954 / HTE831).